Consider the following 249-residue polypeptide: AAGTIQTSVNDVGSKTHLTCSLNSSGVDIIGHRWMRGGKILQEDTLPDLQTQYTVDIDDRSGDYACIFLPEPVGRSNIVVEGPPRIKVGKKSEHSSEGENVRLICKSESSHPPVTEWSWFKTSDSGDQLITNSSESKYVVISTADRSELTISNLDINSDPGTYMCNATNTQGSVQEIMTLRVRSRLAALWPFLGIVAEVLVLVTIIFIYEKRRKPDQTLDEDDPGAAPLKGSGHHMNDKDKNVRQRNAT.

Residues 1-82 (AAGTIQTSVN…VGRSNIVVEG (82 aa)) enclose the Ig-like C2-type domain. Residues 1–187 (AAGTIQTSVN…MTLRVRSRLA (187 aa)) are Extracellular-facing. Intrachain disulfides connect Cys-20-Cys-66 and Cys-105-Cys-165. Residues Asn-23, Asn-132, and Asn-166 are each glycosylated (N-linked (GlcNAc...) asparagine). One can recognise an Ig-like V-type domain in the interval 84-179 (PRIKVGKKSE…TQGSVQEIMT (96 aa)). Residues 188–208 (ALWPFLGIVAEVLVLVTIIFI) traverse the membrane as a helical segment. Residues 209–249 (YEKRRKPDQTLDEDDPGAAPLKGSGHHMNDKDKNVRQRNAT) lie on the Cytoplasmic side of the membrane. The interval 216–249 (DQTLDEDDPGAAPLKGSGHHMNDKDKNVRQRNAT) is disordered. At Thr-218 the chain carries Phosphothreonine. Residue Ser-232 is modified to Phosphoserine.

In terms of assembly, homooligomer. Interacts with VEGFA, KDR/VEGFR2, PPIA/CYPA, SLC16A12, SLC16A11, ATP1B2, MAG, L1CAM and AJAP1. Interacts with SLC16A3; interaction mediates SLC16A3 targeting to the plasma membrane. Interacts with SLC16A1; interaction mediates SLC16A1 targeting to the plasma membrane. Interacts with PPIL2; regulates BSG transport to the cell membrane. Interacts with XKR8; promoting its localization at the cell membrane. Interacts with SLC16A6; this interaction mediates targeting to the plasma membrane.

It localises to the cell membrane. Its subcellular location is the endoplasmic reticulum membrane. The protein resides in the basolateral cell membrane. In terms of biological role, signaling receptor for cyclophilins, essential for PPIA/CYPA and PPIB/CYPB-dependent signaling related to chemotaxis and adhesion of immune cells. Plays an important role in targeting the monocarboxylate transporters SLC16A1/GLUT1, SLC16A3, SLC16A8, SLC16A11 and SLC16A12 to the plasma membrane. Acts as a coreceptor for vascular endothelial growth factor receptor 2 (KDR/VEGFR2) in endothelial cells enhancing its VEGFA-mediated activation and downstream signaling. Promotes angiogenesis through EPAS1/HIF2A-mediated up-regulation of VEGFA and KDR/VEGFR2 in endothelial cells. The protein is Basigin (BSG) of Cricetulus griseus (Chinese hamster).